The sequence spans 273 residues: Glutamate 5-kinase (273 aa).

Lys15 is a binding site for ATP. Substrate contacts are provided by Ser55, Asp142, and Asn158. ATP-binding positions include 178–179 (SD) and 220–226 (TGGMLSK).

Belongs to the glutamate 5-kinase family.

It localises to the cytoplasm. The enzyme catalyses L-glutamate + ATP = L-glutamyl 5-phosphate + ADP. The protein operates within amino-acid biosynthesis; L-proline biosynthesis; L-glutamate 5-semialdehyde from L-glutamate: step 1/2. Functionally, catalyzes the transfer of a phosphate group to glutamate to form L-glutamate 5-phosphate. The chain is Glutamate 5-kinase from Streptococcus pyogenes serotype M18 (strain MGAS8232).